We begin with the raw amino-acid sequence, 65 residues long: Temporin-LK1 (65 aa).

The first 22 residues, 1 to 22, serve as a signal peptide directing secretion; it reads MFTMKKSLLLLFFLGAINLPLC. A propeptide spanning residues 23 to 44 is cleaved from the precursor; sequence QEERNAEEERRDGDDEGSVEVQ. Phenylalanine 63 is subject to Phenylalanine amide.

Expressed by the skin glands.

Its subcellular location is the secreted. Its function is as follows. Has antimicrobial activity against Gram-positive bacteria S.aureus ATCC 2592 (MIC=2.5 uM), S.aureus ATCC 43300 (MIC=2.5 uM) and B.subtilis (MIC=15.0 uM), against Gram-negative bacteria E.coli ML-35P (MIC=30.0 uM), P.aeruginosa PA01 (MIC=2.5 uM) and P.aeruginosa ATCC 27853 (MIC=2.5 uM) and against fungus C.albicans ATCC 2002 (MIC=5.0 uM). The protein is Temporin-LK1 of Limnonectes kuhlii (Kuhl's Creek frog).